The sequence spans 292 residues: tRNA-cytidine(32) 2-sulfurtransferase (292 aa).

Residues 54 to 59 (SGGKDS) carry the PP-loop motif motif. Residues C129, C132, and C220 each coordinate [4Fe-4S] cluster.

The protein belongs to the TtcA family. In terms of assembly, homodimer. The cofactor is Mg(2+). It depends on [4Fe-4S] cluster as a cofactor.

It localises to the cytoplasm. It catalyses the reaction cytidine(32) in tRNA + S-sulfanyl-L-cysteinyl-[cysteine desulfurase] + AH2 + ATP = 2-thiocytidine(32) in tRNA + L-cysteinyl-[cysteine desulfurase] + A + AMP + diphosphate + H(+). The protein operates within tRNA modification. Functionally, catalyzes the ATP-dependent 2-thiolation of cytidine in position 32 of tRNA, to form 2-thiocytidine (s(2)C32). The sulfur atoms are provided by the cysteine/cysteine desulfurase (IscS) system. This is tRNA-cytidine(32) 2-sulfurtransferase from Cereibacter sphaeroides (strain ATCC 17025 / ATH 2.4.3) (Rhodobacter sphaeroides).